The primary structure comprises 119 residues: Integration host factor subunit beta (119 aa).

The disordered stretch occupies residues 91–119; the sequence is DLVGNDQGDDSSNGSSDPLQSVMDMHAMH. Residues 94-107 are compositionally biased toward low complexity; the sequence is GNDQGDDSSNGSSD.

Belongs to the bacterial histone-like protein family. As to quaternary structure, heterodimer of an alpha and a beta chain.

This protein is one of the two subunits of integration host factor, a specific DNA-binding protein that functions in genetic recombination as well as in transcriptional and translational control. This chain is Integration host factor subunit beta, found in Bordetella parapertussis (strain 12822 / ATCC BAA-587 / NCTC 13253).